The primary structure comprises 144 residues: C-C motif chemokine 25 (144 aa).

An N-terminal signal peptide occupies residues 1-23 (MKLWLFACLVACFVGAWMPVVHA). 2 cysteine pairs are disulfide-bonded: cysteine 30-cysteine 58 and cysteine 31-cysteine 73. Positions 98 to 144 (KSASDSQTERKKSNHMKSKVENPNSTSVRSATLGHPRMVMMPRKTNN) are disordered. Positions 118-127 (ENPNSTSVRS) are enriched in polar residues.

It belongs to the intercrine beta (chemokine CC) family. In terms of tissue distribution, specifically expressed by thymic dendritic cells. High levels in thymus and small intestine.

Its subcellular location is the secreted. In terms of biological role, potentially involved in T-cell development. Recombinant protein shows chemotactic activity on thymocytes, macrophages, THP-1 cells, and dendritics cells but is inactive on peripheral blood lymphocytes and neutrophils. Binds to CCR9. Binds to atypical chemokine receptor ACKR4 and mediates the recruitment of beta-arrestin (ARRB1/2) to ACKR4. In Mus musculus (Mouse), this protein is C-C motif chemokine 25 (Ccl25).